We begin with the raw amino-acid sequence, 432 residues long: Glutamate-1-semialdehyde 2,1-aminomutase (432 aa).

Lys270 is subject to N6-(pyridoxal phosphate)lysine.

It belongs to the class-III pyridoxal-phosphate-dependent aminotransferase family. HemL subfamily. In terms of assembly, homodimer. Pyridoxal 5'-phosphate is required as a cofactor.

The protein resides in the cytoplasm. The catalysed reaction is (S)-4-amino-5-oxopentanoate = 5-aminolevulinate. Its pathway is porphyrin-containing compound metabolism; protoporphyrin-IX biosynthesis; 5-aminolevulinate from L-glutamyl-tRNA(Glu): step 2/2. The protein is Glutamate-1-semialdehyde 2,1-aminomutase of Acinetobacter baumannii (strain ATCC 17978 / DSM 105126 / CIP 53.77 / LMG 1025 / NCDC KC755 / 5377).